A 187-amino-acid chain; its full sequence is Elongation factor P (187 aa).

Position 34 is an N6-(3,6-diaminohexanoyl)-5-hydroxylysine (Lys-34).

It belongs to the elongation factor P family. Post-translationally, may be beta-lysylated on the epsilon-amino group of Lys-34 by the combined action of EpmA and EpmB, and then hydroxylated on the C5 position of the same residue by EpmC (if this protein is present). Lysylation is critical for the stimulatory effect of EF-P on peptide-bond formation. The lysylation moiety may extend toward the peptidyltransferase center and stabilize the terminal 3-CCA end of the tRNA. Hydroxylation of the C5 position on Lys-34 may allow additional potential stabilizing hydrogen-bond interactions with the P-tRNA.

It is found in the cytoplasm. It participates in protein biosynthesis; polypeptide chain elongation. In terms of biological role, involved in peptide bond synthesis. Alleviates ribosome stalling that occurs when 3 or more consecutive Pro residues or the sequence PPG is present in a protein, possibly by augmenting the peptidyl transferase activity of the ribosome. Modification of Lys-34 is required for alleviation. This Vesicomyosocius okutanii subsp. Calyptogena okutanii (strain HA) protein is Elongation factor P.